The primary structure comprises 511 residues: S-layer protein B (511 aa).

Residues 1 to 24 (MVKYMNLIVLGMLMFGVFVTLSLG) form the signal peptide. Positions 358–392 (IQRLQSEVSVLESEVDQLKVEIQSLNETLTLQASE) form a coiled coil. A helical transmembrane segment spans residues 487–507 (GGIILGVIALIIAIVAVVLVF).

It belongs to the Sulfolobales SlaB family. In terms of assembly, the mushroom-shaped unit cells of the Sulfolobales' S-layers may consist of three SlaB subunits and six SlaA subunits.

The protein resides in the secreted. It localises to the cell wall. The protein localises to the S-layer. Its subcellular location is the cell membrane. In terms of biological role, S-layer small protein. May anchor the complex to the cell membrane. The protein is S-layer protein B of Acidianus ambivalens (Desulfurolobus ambivalens).